Here is a 490-residue protein sequence, read N- to C-terminus: Betaine aldehyde dehydrogenase (490 aa).

Ser-26, Ile-27, and Asp-93 together coordinate K(+). Position 150–152 (150–152) interacts with NAD(+); it reads GAW. Lys-162 (charge relay system) is an active-site residue. 176-179 serves as a coordination point for NAD(+); the sequence is KPSE. Residue Val-180 coordinates K(+). Residue 230-233 participates in NAD(+) binding; the sequence is GTVT. K(+) is bound at residue Leu-246. Glu-252 acts as the Proton acceptor in catalysis. Residues Gly-254, Cys-286, and Glu-387 each contribute to the NAD(+) site. Cys-286 functions as the Nucleophile in the catalytic mechanism. At Cys-286 the chain carries Cysteine sulfenic acid (-SOH). K(+) contacts are provided by Lys-457 and Gly-460. The active-site Charge relay system is Glu-464.

This sequence belongs to the aldehyde dehydrogenase family. As to quaternary structure, dimer of dimers. K(+) is required as a cofactor.

It catalyses the reaction betaine aldehyde + NAD(+) + H2O = glycine betaine + NADH + 2 H(+). The protein operates within amine and polyamine biosynthesis; betaine biosynthesis via choline pathway; betaine from betaine aldehyde: step 1/1. Involved in the biosynthesis of the osmoprotectant glycine betaine. Catalyzes the irreversible oxidation of betaine aldehyde to the corresponding acid. This chain is Betaine aldehyde dehydrogenase, found in Ectopseudomonas mendocina (strain ymp) (Pseudomonas mendocina).